Consider the following 75-residue polypeptide: ATP synthase subunit epsilon, mitochondrial (75 aa).

The N-terminal 9 residues, 1-9 (MIRRSCALL), are a transit peptide targeting the mitochondrion.

Belongs to the eukaryotic ATPase epsilon family. In terms of assembly, F-type ATPases have 2 components, F(1) - the catalytic core - and F(o) - the membrane proton channel. F(1) has five subunits: alpha(3), beta(3), gamma(1), delta(1), epsilon(1), plus the additional subunit P18 (Tb427.05.1710) that is not present in F(1)F(o) ATP synthase from metazoa. Subunit P18 (Tb927.5.1710) interacts with the alpha subunit with a 1:1 stoichiometry; the interaction is direct. Subunit gamma is part of the central stalk. F(o) has three main subunits: a, b and c. The trypanosomal ATPase complex contains additional subunits that are not present in the F(1)F(o) ATP synthase from metazoa.

The protein resides in the mitochondrion. It localises to the mitochondrion inner membrane. In terms of biological role, mitochondrial membrane ATP synthase (F(1)F(o) ATP synthase) produces ATP from ADP in the presence of a proton gradient across the membrane which is generated by electron transport complexes of the respiratory chain. F-type ATPases consist of two structural domains, F(1) - containing the extramembraneous catalytic core, and F(o) - containing the membrane proton channel, linked together by a central stalk and a peripheral stalk. During catalysis, ATP synthesis in the catalytic domain of F(1) is coupled via a rotary mechanism of the central stalk subunits to proton translocation. Subunits alpha and beta form the catalytic core in F(1). Rotation of the central stalk against the surrounding alpha(3)beta(3) subunits leads to hydrolysis of ATP in three separate catalytic sites on the beta subunits. Contrary to the procyclic, insect form that requires F(1)F(o) ATP synthase for ATP synthesis, the bloodstream form relies on ATP hydrolysis by F(1)F(o) ATP synthase to maintain its mitochondrial membrane potential. In Trypanosoma brucei brucei, this protein is ATP synthase subunit epsilon, mitochondrial.